The sequence spans 84 residues: Magnetosome protein MamG (84 aa).

The Cytoplasmic portion of the chain corresponds to 1–3; sequence MIK. The chain crosses the membrane as a helical span at residues 4-24; it reads GIAGVGGTALGVGGGVAAPPV. The Lumenal portion of the chain corresponds to 25–40; that stretch reads SAAAVGSTLLAGKGVC. Positions 41–48 are LG repeat; sequence LGLGLGLG. Residues 41 to 61 traverse the membrane as a helical segment; it reads LGLGLGLGAWGPVLLGVAGLA. Residues 62-84 lie on the Cytoplasmic side of the membrane; sequence CAASLCDYLKNRKAQAEASAEPA.

The protein belongs to the magnetosome MamG (TC 9.B.95) protein family.

It localises to the magnetosome membrane. Its function is as follows. Plays a role in regulating magnetite crystal size. This is Magnetosome protein MamG from Magnetospirillum gryphiswaldense (strain DSM 6361 / JCM 21280 / NBRC 15271 / MSR-1).